The sequence spans 150 residues: uncharacterized protein (150 aa).

It belongs to the OsmC/Ohr family.

This is an uncharacterized protein from Bacillus subtilis (strain 168).